Consider the following 203-residue polypeptide: uncharacterized protein (203 aa).

Disordered regions lie at residues 65-84 and 92-170; these read LSLSEDEDEDESELEDSFDS and SSSS…ETAL. Acidic residues-rich tracts occupy residues 68 to 82 and 98 to 110; these read SEDEDEDESELEDSF and SEEESEEEEEESL. The segment covering 111-122 has biased composition (low complexity); that stretch reads DSSFLVSASLSL. Residues 123–168 show a composition bias toward acidic residues; the sequence is SEDDEEEDSESEDEDEDEDSDSDSDSDSDSDEDEDEDEDSEEEEET. The helical transmembrane segment at 182-202 threads the bilayer; sequence TSFLLPFTLVVLAILFYPAWV.

The protein resides in the membrane. This is an uncharacterized protein from Saccharomyces cerevisiae (strain ATCC 204508 / S288c) (Baker's yeast).